Consider the following 548-residue polypeptide: Chaperonin GroEL (548 aa).

ATP-binding positions include 29–32 (TMGP), Lys50, 86–90 (DGTTT), Gly414, 478–480 (NAA), and Asp494.

The protein belongs to the chaperonin (HSP60) family. In terms of assembly, forms a cylinder of 14 subunits composed of two heptameric rings stacked back-to-back. Interacts with the co-chaperonin GroES.

It localises to the cytoplasm. It carries out the reaction ATP + H2O + a folded polypeptide = ADP + phosphate + an unfolded polypeptide.. Together with its co-chaperonin GroES, plays an essential role in assisting protein folding. The GroEL-GroES system forms a nano-cage that allows encapsulation of the non-native substrate proteins and provides a physical environment optimized to promote and accelerate protein folding. This chain is Chaperonin GroEL, found in Legionella pneumophila (strain Paris).